The following is a 135-amino-acid chain: Large ribosomal subunit protein uL16c (135 aa).

Belongs to the universal ribosomal protein uL16 family. As to quaternary structure, part of the 50S ribosomal subunit.

It is found in the plastid. It localises to the chloroplast. The protein is Large ribosomal subunit protein uL16c of Stigeoclonium helveticum (Green alga).